We begin with the raw amino-acid sequence, 882 residues long: Serine/threonine-protein kinase greatwall (882 aa).

Met1 carries the N-acetylmethionine modification. Residues Phe35 to Phe838 enclose the Protein kinase domain. ATP is bound by residues Ile41–Val49 and Lys62. Asp156 serves as the catalytic Proton acceptor. Phosphothreonine is present on residues Thr207 and Thr222. Phosphoserine is present on residues Ser293, Ser371, and Ser454. Thr521 is subject to Phosphothreonine. Phosphoserine is present on residues Ser554, Ser558, Ser633, Ser660, and Ser671. Positions Thr713 to Val736 are disordered. Thr725 bears the Phosphothreonine mark. Ser728 bears the Phosphoserine mark. Phosphothreonine; by CDK1 is present on Thr744. In terms of domain architecture, AGC-kinase C-terminal spans Ser839–Leu882. Phosphoserine occurs at positions 878 and 881.

The protein belongs to the protein kinase superfamily. AGC Ser/Thr protein kinase family. Phosphorylation at Thr-744 by CDK1 during M phase activates its kinase activity. Maximum phosphorylation occurs in prometaphase.

The protein resides in the cytoplasm. It is found in the cytoskeleton. The protein localises to the microtubule organizing center. It localises to the centrosome. Its subcellular location is the nucleus. The catalysed reaction is L-seryl-[protein] + ATP = O-phospho-L-seryl-[protein] + ADP + H(+). It catalyses the reaction L-threonyl-[protein] + ATP = O-phospho-L-threonyl-[protein] + ADP + H(+). In terms of biological role, serine/threonine kinase that plays a key role in M phase by acting as a regulator of mitosis entry and maintenance. Acts by promoting the inactivation of protein phosphatase 2A (PP2A) during M phase: does not directly inhibit PP2A but acts by mediating phosphorylation and subsequent activation of ARPP19 and ENSA at 'Ser-62' and 'Ser-67', respectively. ARPP19 and ENSA are phosphatase inhibitors that specifically inhibit the PPP2R2D (PR55-delta) subunit of PP2A. Inactivation of PP2A during M phase is essential to keep cyclin-B1-CDK1 activity high. Following DNA damage, it is also involved in checkpoint recovery by being inhibited. The protein is Serine/threonine-protein kinase greatwall (MASTL) of Ailuropoda melanoleuca (Giant panda).